A 122-amino-acid chain; its full sequence is Small ribosomal subunit protein uS13 (122 aa).

Residues 99 to 122 (RGQRTHTNARTRKGPAKAIAGKKK) form a disordered region.

This sequence belongs to the universal ribosomal protein uS13 family. Part of the 30S ribosomal subunit. Forms a loose heterodimer with protein S19. Forms two bridges to the 50S subunit in the 70S ribosome.

In terms of biological role, located at the top of the head of the 30S subunit, it contacts several helices of the 16S rRNA. In the 70S ribosome it contacts the 23S rRNA (bridge B1a) and protein L5 of the 50S subunit (bridge B1b), connecting the 2 subunits; these bridges are implicated in subunit movement. Contacts the tRNAs in the A and P-sites. The polypeptide is Small ribosomal subunit protein uS13 (Bradyrhizobium sp. (strain ORS 278)).